We begin with the raw amino-acid sequence, 150 residues long: Natriuretic peptides A (150 aa).

A signal peptide spans 1-24 (MSSFTITVSFLLVLVFQFPGQTRA). Propeptides lie at residues 25–122 (NPVY…AAPR) and 92–102 (DGGALGRGPWD). The interval 77–100 (LEVPPWTGEVNPAQRDGGALGRGP) is disordered. A Phosphoserine modification is found at S128. C129 and C145 are oxidised to a cystine.

It belongs to the natriuretic peptide family. As to quaternary structure, homodimer; disulfide-linked antiparallel dimer. The precursor molecule is proteolytically cleaved by CORIN at Arg-122 to produce the atrial natriuretic peptide. Undergoes further proteolytic cleavage by unknown proteases to give rise to long-acting natriuretic peptide, vessel dilator and kaliuretic peptide. Additional processing gives rise to the auriculin and atriopeptin peptides. In the kidneys, alternative processing by an unknown protease results in the peptide urodilatin. In terms of processing, cleavage by MME initiates degradation of the factor and thereby regulates its activity. Degradation by IDE results in reduced activation of NPR1 (in vitro). During IDE degradation, the resulting products can temporarily stimulate NPR2 to produce cGMP, before the fragments are completely degraded and inactivated by IDE (in vitro). Post-translationally, degraded by IDE. Phosphorylation on Ser-128 decreases vasorelaxant activity. In terms of tissue distribution, brain (at protein level).

The protein resides in the secreted. It localises to the perikaryon. It is found in the cell projection. Its function is as follows. Hormone that plays a key role in mediating cardio-renal homeostasis, and is involved in vascular remodeling and regulating energy metabolism. Acts by specifically binding and stimulating NPR1 to produce cGMP, which in turn activates effector proteins, such as PRKG1, that drive various biological responses. Regulates vasodilation, natriuresis, diuresis and aldosterone synthesis and is therefore essential for regulating blood pressure, controlling the extracellular fluid volume and maintaining the fluid-electrolyte balance. Also involved in inhibiting cardiac remodeling and cardiac hypertrophy by inducing cardiomyocyte apoptosis and attenuating the growth of cardiomyocytes and fibroblasts. Plays a role in female pregnancy by promoting trophoblast invasion and spiral artery remodeling in uterus, and thus prevents pregnancy-induced hypertension. In adipose tissue, acts in various cGMP- and PKG-dependent pathways to regulate lipid metabolism and energy homeostasis. This includes up-regulating lipid metabolism and mitochondrial oxygen utilization by activating the AMP-activated protein kinase (AMPK), and increasing energy expenditure by acting via MAPK11 to promote the UCP1-dependent thermogenesis of brown adipose tissue. Binds the clearance receptor NPR3 which removes the hormone from circulation. Functionally, may have a role in cardio-renal homeostasis through regulation of natriuresis, diuresis, vasodilation, and inhibiting aldosterone synthesis. In vitro, promotes the production of cGMP and induces vasodilation. May promote natriuresis, at least in part, by enhancing prostaglandin E2 synthesis resulting in the inhibition of renal Na+-K+-ATPase. However reports on the involvement of this peptide in mammal blood volume and blood pressure homeostasis are conflicting; according to a report, in vivo it is not sufficient to activate cGMP and does not inhibit collecting duct transport nor effect diuresis and natriuresis. Appears to bind to specific receptors that are distinct from the receptors bound by atrial natriuretic peptide and vessel dilator. Possibly enhances protein excretion in urine by decreasing proximal tubular protein reabsorption. In terms of biological role, may have a role in cardio-renal homeostasis through regulation of natriuresis, diuresis, and vasodilation. In vitro, promotes the production of cGMP and induces vasodilation. May promote natriuresis, at least in part, by enhancing prostaglandin E2 synthesis resulting in the inhibition of renal Na+-K+-ATPase. However reports on the involvement of this peptide in mammal blood volume and blood pressure homeostasis are conflicting; according to a report it is not sufficient to activate cGMP and does not inhibit collecting duct transport nor effect diuresis and natriuresis. Appears to bind to specific receptors that are distinct from the receptors bound by the atrial natriuretic and long-acting natriuretic peptides. Possibly functions in protein excretion in urine by maintaining the integrity of the proximal tubules and enhancing protein excretion by decreasing proximal tubular protein reabsorption. May have a role in cardio-renal homeostasis through regulation of diuresis and inhibiting aldosterone synthesis. In vitro, promotes the production of cGMP and induces vasodilation. May promote natriuresis, at least in part, by enhancing prostaglandin E2 synthesis resulting in the inhibition of renal Na+-K+-ATPase. May have a role in potassium excretion but not sodium excretion (natriuresis). Possibly enhances protein excretion in urine by decreasing proximal tubular protein reabsorption. Its function is as follows. Hormone produced in the kidneys that appears to be important for maintaining cardio-renal homeostasis. Mediates vasodilation, natriuresis and diuresis primarily in the renal system, in order to maintain the extracellular fluid volume and control the fluid-electrolyte balance. Specifically binds and stimulates cGMP production by renal transmembrane receptors, likely NPR1. Urodilatin not ANP, may be the natriuretic peptide responsible for the regulation of sodium and water homeostasis in the kidney. Functionally, may have a role in cardio-renal homeostasis through regulation of natriuresis and vasodilation. In vivo promotes natriuresis and in vitro, vasodilates renal artery strips. In terms of biological role, may have a role in cardio-renal homeostasis through regulation of regulation of natriuresis and vasodilation. In vivo promotes natriuresis. In vitro, vasodilates intestinal smooth muscle but not smooth muscle strips. May have a role in cardio-renal homeostasis through regulation of natriuresis and vasodilation. In vivo promotes natriuresis. In vitro, selectively vasodilates intestinal and vascular smooth muscle strips. Its function is as follows. May have a role in cardio-renal homeostasis through regulation of natriuresis and vasodilation. In vivo promotes natriuresis. In vitro, selectively vasodilates intestinal smooth muscle but not vascular smooth muscle strips. This is Natriuretic peptides A (NPPA) from Sus scrofa (Pig).